Here is a 277-residue protein sequence, read N- to C-terminus: Large ribosomal subunit protein uL2 (277 aa).

2 disordered regions span residues Met-1 to Asp-20 and Gly-210 to Lys-277. Residues Gly-210–Gln-221 show a composition bias toward basic residues.

Belongs to the universal ribosomal protein uL2 family. As to quaternary structure, part of the 50S ribosomal subunit. Forms a bridge to the 30S subunit in the 70S ribosome.

One of the primary rRNA binding proteins. Required for association of the 30S and 50S subunits to form the 70S ribosome, for tRNA binding and peptide bond formation. It has been suggested to have peptidyltransferase activity; this is somewhat controversial. Makes several contacts with the 16S rRNA in the 70S ribosome. This is Large ribosomal subunit protein uL2 from Deinococcus deserti (strain DSM 17065 / CIP 109153 / LMG 22923 / VCD115).